A 359-amino-acid chain; its full sequence is Probable dual-specificity RNA methyltransferase RlmN (359 aa).

The Proton acceptor role is filled by Glu-99. In terms of domain architecture, Radical SAM core spans 105–342 (TENRRTACVS…VTIRKSYGTT (238 aa)). Cys-112 and Cys-347 are disulfide-bonded. 3 residues coordinate [4Fe-4S] cluster: Cys-119, Cys-123, and Cys-126. Residues 171–172 (GE), Ser-204, 227–229 (SLH), and Asn-304 contribute to the S-adenosyl-L-methionine site. The active-site S-methylcysteine intermediate is Cys-347.

Belongs to the radical SAM superfamily. RlmN family. The cofactor is [4Fe-4S] cluster.

The protein localises to the cytoplasm. It carries out the reaction adenosine(2503) in 23S rRNA + 2 reduced [2Fe-2S]-[ferredoxin] + 2 S-adenosyl-L-methionine = 2-methyladenosine(2503) in 23S rRNA + 5'-deoxyadenosine + L-methionine + 2 oxidized [2Fe-2S]-[ferredoxin] + S-adenosyl-L-homocysteine. The enzyme catalyses adenosine(37) in tRNA + 2 reduced [2Fe-2S]-[ferredoxin] + 2 S-adenosyl-L-methionine = 2-methyladenosine(37) in tRNA + 5'-deoxyadenosine + L-methionine + 2 oxidized [2Fe-2S]-[ferredoxin] + S-adenosyl-L-homocysteine. Specifically methylates position 2 of adenine 2503 in 23S rRNA and position 2 of adenine 37 in tRNAs. The sequence is that of Probable dual-specificity RNA methyltransferase RlmN from Pelodictyon phaeoclathratiforme (strain DSM 5477 / BU-1).